The sequence spans 327 residues: L-lactate dehydrogenase (327 aa).

Residues Val18, Asp39, Lys44, Tyr69, and 83–84 (GA) each bind NAD(+). Residues Gln86, Arg92, and 124–127 (NPVD) contribute to the substrate site. NAD(+) is bound by residues 122 to 124 (AAN) and Ser147. Residue 152–155 (DSAR) participates in substrate binding. The beta-D-fructose 1,6-bisphosphate site is built by Arg157 and His172. Catalysis depends on His179, which acts as the Proton acceptor. The residue at position 224 (Tyr224) is a Phosphotyrosine. Thr233 is a binding site for substrate.

This sequence belongs to the LDH/MDH superfamily. LDH family. Homotetramer.

Its subcellular location is the cytoplasm. The enzyme catalyses (S)-lactate + NAD(+) = pyruvate + NADH + H(+). It functions in the pathway fermentation; pyruvate fermentation to lactate; (S)-lactate from pyruvate: step 1/1. With respect to regulation, allosterically activated by fructose 1,6-bisphosphate (FBP). Functionally, catalyzes the conversion of lactate to pyruvate. The protein is L-lactate dehydrogenase of Streptococcus equi subsp. equi (strain 4047).